Here is a 454-residue protein sequence, read N- to C-terminus: Ornithine aminotransferase (454 aa).

Pyridoxal 5'-phosphate is bound by residues Gly124, Thr125, and Gln267. Lys293 carries the N6-(pyridoxal phosphate)lysine modification. Residue Thr321 coordinates pyridoxal 5'-phosphate.

This sequence belongs to the class-III pyridoxal-phosphate-dependent aminotransferase family. As to quaternary structure, homotetramer; dimer of dimers. Requires pyridoxal 5'-phosphate as cofactor.

The catalysed reaction is L-ornithine + 2-oxoglutarate = L-glutamate 5-semialdehyde + L-glutamate. It carries out the reaction L-lysine + 2-oxoglutarate = (S)-2-amino-6-oxohexanoate + L-glutamate. Functionally, catalyzes the conversion of L-ornithine and 2-oxoglutarate to L-glutamate semialdehyde and L-glutamate. L-ornithine is the best substrate, but the enzyme also shows good activity toward L-lysine, and low activity toward D-ornithine, D-lysine, 5-aminovalerate, 6-aminohexanoate and GABA. The enzyme activity is specific for 2-oxoglutarate. This is Ornithine aminotransferase from Pyrococcus horikoshii (strain ATCC 700860 / DSM 12428 / JCM 9974 / NBRC 100139 / OT-3).